The following is a 439-amino-acid chain: Acyl-coenzyme A thioesterase 9, mitochondrial (439 aa).

The N-terminal 21 residues, 1-21 (MKRAAIRLWTLNKGLLTHGRG), are a transit peptide targeting the mitochondrion. HotDog ACOT-type domains are found at residues 85-209 (SYIE…RDSE) and 289-401 (EDTK…EKEV). N6-acetyllysine is present on Lys102.

It belongs to the acyl coenzyme A hydrolase family. In terms of assembly, interacts with NYAP1, NYAP2 and MYO16. Widely expressed.

The protein resides in the mitochondrion. The protein localises to the mitochondrion matrix. It localises to the mitochondrion inner membrane. The catalysed reaction is butanoyl-CoA + H2O = butanoate + CoA + H(+). It carries out the reaction propanoyl-CoA + H2O = propanoate + CoA + H(+). It catalyses the reaction hexadecanoyl-CoA + H2O = hexadecanoate + CoA + H(+). The enzyme catalyses octanoyl-CoA + H2O = octanoate + CoA + H(+). The catalysed reaction is decanoyl-CoA + H2O = decanoate + CoA + H(+). It carries out the reaction tetradecanoyl-CoA + H2O = tetradecanoate + CoA + H(+). It catalyses the reaction 4,8-dimethylnonanoyl-CoA + H2O = 4,8-dimethylnonanoate + CoA + H(+). The enzyme catalyses 3-methylbutanoyl-CoA + H2O = 3-methylbutanoate + CoA + H(+). The catalysed reaction is 2-methylpropanoyl-CoA + H2O = 2-methylpropanoate + CoA + H(+). It participates in lipid metabolism; fatty acid metabolism. Its activity is regulated as follows. Strongly inhibited by NADH and CoA. Its function is as follows. Mitochondrial acyl-CoA thioesterase. Catalyzes the hydrolysis of acyl-CoAs into free fatty acids and coenzyme A (CoA), regulating their respective intracellular levels. Shows a clear preference for hydrophobic short-, medium-, and long-chain saturated acyl-CoAs with some activity also with short-chain dicarboxylic CoA esters. Regulates both mitochondrial lipid and amino acid metabolism. The protein is Acyl-coenzyme A thioesterase 9, mitochondrial (Acot9) of Mus musculus (Mouse).